Consider the following 222-residue polypeptide: RNA-binding protein KhpB (222 aa).

A jag_N domain region spans residues D2–I51. Residues K54 to K133 form the KH domain. Positions N138–S204 constitute an R3H domain.

This sequence belongs to the KhpB RNA-binding protein family. As to quaternary structure, forms a complex with KhpA. Homodimer or homotrimer.

It localises to the cytoplasm. In terms of biological role, a probable RNA chaperone. Forms a complex with KhpA which binds to cellular RNA and controls its expression. Plays a role in peptidoglycan (PG) homeostasis and cell length regulation. In Clostridium symbiosum (Bacteroides symbiosus), this protein is RNA-binding protein KhpB.